A 311-amino-acid chain; its full sequence is Olfactory receptor-like protein OLF1 (311 aa).

At 1 to 24 the chain is on the extracellular side; it reads MDGNYTLVTEFILLGFPTRPELQI. The N-linked (GlcNAc...) asparagine glycan is linked to Asn4. A helical transmembrane segment spans residues 25–48; sequence VLFLVFLTLYGIILTGNIGLMMLI. Over 49-56 the chain is Cytoplasmic; that stretch reads RTDPHLQT. The helical transmembrane segment at 57–78 threads the bilayer; it reads PMYFFLSNLSFADLCFSSAIVP. Residues 79–99 are Extracellular-facing; it reads KMLVNFLSENKSISLYGCALQ. Residues 100-119 traverse the membrane as a helical segment; that stretch reads FYFSCAFADTESFILAAMAY. Residues 120–138 lie on the Cytoplasmic side of the membrane; that stretch reads DRYVAICNPLLYTVVMSRG. The helical transmembrane segment at 139-157 threads the bilayer; the sequence is ICVWLIVLSYIGGNMSSLV. Residues 158 to 195 lie on the Extracellular side of the membrane; sequence HTSFAFILKYCDKNVINHFFCDLPPLLKLSCTDTSVNE. Residues 196-218 form a helical membrane-spanning segment; that stretch reads WLLSTYGSSVEIFCFIVIVISYY. Residues 219-235 lie on the Cytoplasmic side of the membrane; sequence FILRSVLRIRSSSGRKK. The chain crosses the membrane as a helical span at residues 236–259; the sequence is TFSTCASHLTSVAIYQGTLLFIYS. The Extracellular segment spans residues 260-271; sequence RPTYLYTPNTDK. The helical transmembrane segment at 272–291 threads the bilayer; it reads IISVFYTIIIPVLNPLIYSL. The Cytoplasmic segment spans residues 292–311; sequence RNKDVKDAAKRAVRLKVDSS.

The protein belongs to the G-protein coupled receptor 1 family.

Its subcellular location is the cell membrane. Its function is as follows. Putative odorant or sperm cell receptor. The chain is Olfactory receptor-like protein OLF1 from Canis lupus familiaris (Dog).